The primary structure comprises 537 residues: DEAD-box ATP-dependent RNA helicase 5 (537 aa).

The disordered stretch occupies residues 1–97 (MAGQKQELPV…EDLGEGESEQ (97 aa)). Residues 22-80 (TNKKKKKSKKNKHTEENHEVEEVPQEVTNGVEEELSNKEKKKKRKREEKESEKNKKKDV) adopt a coiled-coil conformation. Residues 23-33 (NKKKKKSKKNK) show a composition bias toward basic residues. Over residues 68–87 (EEKESEKNKKKDVPEKKLEA) the composition is skewed to basic and acidic residues. The short motif at 116–142 (KTFAESNLPENVLDCCKTFEKPSPIQS) is the Q motif element. The 180-residue stretch at 145–324 (WPFLLDGRDL…QEFMDPNPIK (180 aa)) folds into the Helicase ATP-binding domain. 158-165 (AKTGSGKT) provides a ligand contact to ATP. Residues 272 to 275 (DEAD) carry the DEAD box motif. The region spanning 349 to 500 (ARDQRLIALL…VVPADLLKFG (152 aa)) is the Helicase C-terminal domain. Phosphoserine is present on serine 533.

It belongs to the DEAD box helicase family. DDX5/DBP2 subfamily.

It localises to the nucleus. Its subcellular location is the nucleolus. It carries out the reaction ATP + H2O = ADP + phosphate + H(+). ATP-dependent RNA helicase required for 60S ribosomal subunit synthesis. Involved in efficient pre-rRNA processing, predominantly at site A3, which is necessary for the normal formation of 25S and 5.8S rRNAs. This chain is DEAD-box ATP-dependent RNA helicase 5 (RH5), found in Arabidopsis thaliana (Mouse-ear cress).